Consider the following 137-residue polypeptide: Small ribosomal subunit protein uS12 (137 aa).

D102 bears the 3-methylthioaspartic acid mark.

The protein belongs to the universal ribosomal protein uS12 family. Part of the 30S ribosomal subunit. Contacts proteins S8 and S17. May interact with IF1 in the 30S initiation complex.

Functionally, with S4 and S5 plays an important role in translational accuracy. Interacts with and stabilizes bases of the 16S rRNA that are involved in tRNA selection in the A site and with the mRNA backbone. Located at the interface of the 30S and 50S subunits, it traverses the body of the 30S subunit contacting proteins on the other side and probably holding the rRNA structure together. The combined cluster of proteins S8, S12 and S17 appears to hold together the shoulder and platform of the 30S subunit. In Mycoplasmopsis agalactiae (strain NCTC 10123 / CIP 59.7 / PG2) (Mycoplasma agalactiae), this protein is Small ribosomal subunit protein uS12.